The following is a 384-amino-acid chain: Putative 8-amino-7-oxononanoate synthase (384 aa).

Residue arginine 19 coordinates substrate. 106-107 (GY) provides a ligand contact to pyridoxal 5'-phosphate. Residue histidine 131 participates in substrate binding. Residues serine 177, 202 to 205 (DDAH), and 233 to 236 (TLSK) each bind pyridoxal 5'-phosphate. Lysine 236 carries the post-translational modification N6-(pyridoxal phosphate)lysine.

It belongs to the class-II pyridoxal-phosphate-dependent aminotransferase family. BioF subfamily. In terms of assembly, homodimer. Requires pyridoxal 5'-phosphate as cofactor.

The enzyme catalyses 6-carboxyhexanoyl-[ACP] + L-alanine + H(+) = (8S)-8-amino-7-oxononanoate + holo-[ACP] + CO2. The protein operates within cofactor biosynthesis; biotin biosynthesis. In terms of biological role, catalyzes the decarboxylative condensation of pimeloyl-[acyl-carrier protein] and L-alanine to produce 8-amino-7-oxononanoate (AON), [acyl-carrier protein], and carbon dioxide. The protein is Putative 8-amino-7-oxononanoate synthase (bioF) of Desulforudis audaxviator (strain MP104C).